We begin with the raw amino-acid sequence, 252 residues long: METPAYDFDSLTDLPPLPPSDFTPSNAFTFPDHNLDFSFLDSTLSLLNRHHLSESTRLEQIFYDSTHTQLFHNDDTTTTTTPFLHLPDLKSIDAVEEPTTMKLFPSLSPPLPAAKRQKLNSTSSSTTSGSPTASNDGGIITKRRKISDKIRSLEKLMPWERKMNLAMTLEESHKYIKFLQSQIASLRWMPLESVYNTAGEVGETDLLKSLTRQQILQVLANSPGSRNVLSSRGVCVFSYEQLLSLKTMSRNL.

A disordered region spans residues 103–141 (LFPSLSPPLPAAKRQKLNSTSSSTTSGSPTASNDGGIIT). Residues 121–134 (STSSSTTSGSPTAS) show a composition bias toward low complexity. In terms of domain architecture, bHLH spans 130–179 (SPTASNDGGIITKRRKISDKIRSLEKLMPWERKMNLAMTLEESHKYIKFL).

As to quaternary structure, homodimer.

It is found in the nucleus. The sequence is that of Transcription factor bHLH117 (BHLH117) from Arabidopsis thaliana (Mouse-ear cress).